The sequence spans 104 residues: Putative pterin-4-alpha-carbinolamine dehydratase (104 aa).

It belongs to the pterin-4-alpha-carbinolamine dehydratase family.

It carries out the reaction (4aS,6R)-4a-hydroxy-L-erythro-5,6,7,8-tetrahydrobiopterin = (6R)-L-erythro-6,7-dihydrobiopterin + H2O. The protein is Putative pterin-4-alpha-carbinolamine dehydratase (pcbD) of Rhizobium meliloti (strain 1021) (Ensifer meliloti).